Here is a 71-residue protein sequence, read N- to C-terminus: MKLTCMVIVAVLLLTACQLITADDSRGTQKHRTLRSKTKLSMSTRCKAAGKPCSRIAYNCCTGSCRSGKCG.

A signal peptide spans 1–22; that stretch reads MKLTCMVIVAVLLLTACQLITA. A propeptide spanning residues 23 to 45 is cleaved from the precursor; sequence DDSRGTQKHRTLRSKTKLSMSTR. Cystine bridges form between Cys-46-Cys-61, Cys-53-Cys-65, and Cys-60-Cys-70. A Cysteine amide modification is found at Cys-70.

Belongs to the conotoxin O1 superfamily. As to expression, expressed by the venom duct.

The protein localises to the secreted. Functionally, omega-conotoxins act at presynaptic membranes, they bind and block voltage-gated calcium channels (Cav). This peptide selectively targets Cav2.2/CACNA1B (IC(50)=160 nM) voltage-gated calcium channels. When tested in mammals, this toxin displays an analgesic potency similar to MVIIA in a range of acute and chronic pain models in rodents, but has less adverse effects (tremor, diminution of spontaneous locomotor activity and bad coordinated locomotion) compared with identical dosages of MVIIA injected intrathecally. This chain is Omega-conotoxin SO-3, found in Conus striatus (Striated cone).